A 107-amino-acid polypeptide reads, in one-letter code: U1-lycotoxin-Ls1b (107 aa).

The first 20 residues, methionine 1 to serine 20, serve as a signal peptide directing secretion. Positions glutamate 21–arginine 41 are excised as a propeptide. 4 disulfide bridges follow: cysteine 44–cysteine 59, cysteine 51–cysteine 68, cysteine 58–cysteine 86, and cysteine 70–cysteine 84.

The protein belongs to the neurotoxin 19 (CSTX) family. 04 (U1-Lctx) subfamily. In terms of tissue distribution, expressed by the venom gland.

The protein resides in the secreted. The sequence is that of U1-lycotoxin-Ls1b from Lycosa singoriensis (Wolf spider).